The sequence spans 940 residues: Protein translocase subunit SecA 1 (940 aa).

Residues glutamine 83, 101 to 105 (GEGKT), and aspartate 490 each bind ATP. The tract at residues 856–940 (AEQGGTATAA…AKPPKSVKRR (85 aa)) is disordered.

Belongs to the SecA family. Monomer and homodimer. Part of the essential Sec protein translocation apparatus which comprises SecA, SecYEG and auxiliary proteins SecDF. Other proteins may also be involved.

The protein localises to the cell membrane. Its subcellular location is the cytoplasm. The catalysed reaction is ATP + H2O + cellular proteinSide 1 = ADP + phosphate + cellular proteinSide 2.. Part of the Sec protein translocase complex. Interacts with the SecYEG preprotein conducting channel. Has a central role in coupling the hydrolysis of ATP to the transfer of proteins into and across the cell membrane, serving as an ATP-driven molecular motor driving the stepwise translocation of polypeptide chains across the membrane. In Mycolicibacterium paratuberculosis (strain ATCC BAA-968 / K-10) (Mycobacterium paratuberculosis), this protein is Protein translocase subunit SecA 1.